The chain runs to 473 residues: Ribulose bisphosphate carboxylase large chain (473 aa).

Substrate contacts are provided by Asn116 and Thr166. Lys168 acts as the Proton acceptor in catalysis. Lys170 is a binding site for substrate. Mg(2+)-binding residues include Lys194, Asp196, and Glu197. Residue Lys194 is modified to N6-carboxylysine. His287 acts as the Proton acceptor in catalysis. Positions 288, 320, and 372 each coordinate substrate.

The protein belongs to the RuBisCO large chain family. Type I subfamily. In terms of assembly, heterohexadecamer of 8 large chains and 8 small chains. In R.sphaeroides the complex is approximately 500 kDa. The cofactor is Mg(2+).

The enzyme catalyses 2 (2R)-3-phosphoglycerate + 2 H(+) = D-ribulose 1,5-bisphosphate + CO2 + H2O. The catalysed reaction is D-ribulose 1,5-bisphosphate + O2 = 2-phosphoglycolate + (2R)-3-phosphoglycerate + 2 H(+). Its function is as follows. RuBisCO catalyzes two reactions: the carboxylation of D-ribulose 1,5-bisphosphate, the primary event in carbon dioxide fixation, as well as the oxidative fragmentation of the pentose substrate. Both reactions occur simultaneously and in competition at the same active site. The sequence is that of Ribulose bisphosphate carboxylase large chain from Thiobacillus denitrificans (strain ATCC 25259 / T1).